Here is a 363-residue protein sequence, read N- to C-terminus: Cyanide hydratase (363 aa).

A CN hydrolase domain is found at 6–285 (YKAACVTSEP…DGLLFVDIDL (280 aa)). The active-site Proton acceptor is glutamate 46. Residue lysine 128 is part of the active site. Residue cysteine 163 is the Nucleophile of the active site.

It belongs to the carbon-nitrogen hydrolase superfamily. Nitrilase family. In terms of assembly, oligomer of dimers, forming left-handed helical fibers.

It carries out the reaction formamide = hydrogen cyanide + H2O. Its function is as follows. Catalyzes the hydration of cyanide to formamide. Degradation of cyanide may be important for plant pathogenic fungi in infection of cyanogenic plants. The polypeptide is Cyanide hydratase (CyhAB) (Alternaria brassicicola (Dark leaf spot agent)).